The primary structure comprises 465 residues: E3 ubiquitin-protein ligase parkin (465 aa).

Residues 1–76 (MIVFVRFNSS…VHIVQRPQRK (76 aa)) enclose the Ubiquitin-like domain. Phosphoserine; by PINK1 is present on S65. The interval 71 to 96 (QRPQRKSHETNASGGDKPQSTPEGSI) is disordered. The segment at 77–237 (SHETNASGGD…LITNNSRSIP (161 aa)) is necessary for PINK1-dependent localization to mitochondria. Phosphothreonine is present on T80. Positions 80–93 (TNASGGDKPQSTPE) are enriched in polar residues. The RING-type 0; atypical zinc-finger motif lies at 141-225 (PTYHSFFVYC…PTSDKDTSVA (85 aa)). The residue at position 175 (T175) is a Phosphothreonine; by PINK1. Residues 204–238 (TRAEFFFKCGAHPTSDKDTSVALNLITNNSRSIPC) form an SYT11 binding 1 region. Residue T217 is modified to Phosphothreonine. The tract at residues 234 to 465 (RSIPCIACTD…ACMGDHWFDV (232 aa)) is TRIAD supradomain. Zn(2+) is bound by residues C238, C241, C253, H257, C260, C263, C289, C293, C332, and C337. The RING-type 1 zinc-finger motif lies at 238–293 (CIACTDVRNPVLVFQCNHRHVICLDCFHLYCVTRLNDRQFVHDAQLGYSLPCVAGC). Positions 257 to 293 (HVICLDCFHLYCVTRLNDRQFVHDAQLGYSLPCVAGC) are SYT11 binding 2. Residues 313 to 377 (NRYQQYGAEE…CKEAYHEGEC (65 aa)) form an IBR-type zinc finger. Residue K349 forms a Glycyl lysine isopeptide (Lys-Gly) (interchain with G-Cter in ISG15) linkage. C352, C360, C365, and C368 together coordinate Zn(2+). K369 is covalently cross-linked (Glycyl lysine isopeptide (Lys-Gly) (interchain with G-Cter in ISG15)). H373 and C377 together coordinate Zn(2+). Positions 378-410 (DSMFEASGATSQAYRVDQRAAEQARWEEASKET) are REP. Zn(2+) is bound by residues C418 and C421. Residues 418 to 449 (CPRCNVPIEKNGGCMHMKCPQPQCKLEWCWNC) form an RING-type 2; atypical zinc finger. C431 is a catalytic residue. Zn(2+)-binding residues include C436, C441, C446, C449, C457, and H461.

This sequence belongs to the RBR family. Parkin subfamily. Forms an E3 ubiquitin ligase complex with UBE2L3 or UBE2L6. Mediates 'Lys-63'-linked polyubiquitination by associating with UBE2V1. Part of a SCF-like complex, consisting of PRKN, CUL1 and FBXW7. Interacts with SNCAIP. Binds to the C2A and C2B domains of SYT11. Interacts and regulates the turnover of SEPTIN5. Part of a complex, including STUB1, HSP70 and GPR37. The amount of STUB1 in the complex increases during ER stress. STUB1 promotes the dissociation of HSP70 from PRKN and GPR37, thus facilitating PRKN-mediated GPR37 ubiquitination. HSP70 transiently associates with unfolded GPR37 and inhibits the E3 activity of PRKN, whereas, STUB1 enhances the E3 activity of PRKN through promotion of dissociation of HSP70 from PRKN-GPR37 complexes. Interacts with PSMD4 and PACRG. Interacts with LRRK2. Interacts with RANBP2. Interacts with SUMO1 but not SUMO2, which promotes nuclear localization and autoubiquitination. Interacts (via first RING-type domain) with AIMP2 (via N-terminus). Interacts with PSMA7 and RNF41. Interacts with PINK1. Forms a complex with PINK1 and PARK7. Interacts with CHPF, the interaction with isoform 2 may facilitate PRKN transport into the mitochondria. Interacts with MFN2 (phosphorylated), promotes PRKN localization in dysfunctional depolarized mitochondria. Interacts with FBXO7; this promotes translocation to dysfunctional depolarized mitochondria. Interacts with ZNF746. Interacts with heat shock protein 70 family members, including HSPA1L, HSPA1A and HSPA8; interaction HSPA1L promotes translocation to damaged mitochondria. Interacts with BAG4 and, to a lesser extent, BAG5; interaction with BAG4 inhibits translocation to damaged mitochondria. Forms a complex with PRKN and PARK7. Interacts with AMBRA1. Auto-ubiquitinates in an E2-dependent manner leading to its own degradation. Also polyubiquitinated by RNF41 for proteasomal degradation. In terms of processing, S-nitrosylated. Post-translationally, phosphorylated. Activation requires phosphorylation at Ser-65 by PINK1 and binding to PINK1 phosphorylated ubiquitin. Phosphorylation at Thr-175 by PINK1 and at Thr-217 is important for mitochondrial localization. As to expression, largely confined to neuronal elements, including fibers and neuropil. Highly expressed at the forebrain level, in pyramidal cells of layer V, in various cortical regions and cerebellum. Expressed in the nucleus of diagonal band of Broca, nucleus basalis, bed nucleus of the stria terminalis, and olfactory tubercle. Moderate expression is seen in most neurons of the subthalamic nucleus, heart, skeletal muscle and testis. Moderate expression was found in frontal cortex, parietal cortex, cerebellum, heart, skeletal muscle and testis.

It is found in the cytoplasm. The protein localises to the cytosol. The protein resides in the nucleus. Its subcellular location is the endoplasmic reticulum. It localises to the mitochondrion. It is found in the mitochondrion outer membrane. The protein localises to the cell projection. The protein resides in the neuron projection. Its subcellular location is the postsynaptic density. It localises to the presynapse. It catalyses the reaction [E2 ubiquitin-conjugating enzyme]-S-ubiquitinyl-L-cysteine + [acceptor protein]-L-lysine = [E2 ubiquitin-conjugating enzyme]-L-cysteine + [acceptor protein]-N(6)-ubiquitinyl-L-lysine.. It functions in the pathway protein modification; protein ubiquitination. With respect to regulation, in the autoinhibited state the side chain of Phe-463 inserts into a hydrophobic groove in RING-0, occluding the ubiquitin acceptor site Cys-431, whereas the REP repressor element binds RING-1 and blocks its E2-binding site. Activation of PRKN requires 2 steps: (1) phosphorylation at Ser-65 by PINK1 and (2) binding to phosphorylated ubiquitin, leading to unlock repression of the catalytic Cys-431 by the RING-0 region via an allosteric mechanism and converting PRKN to its fully-active form. According to another report, phosphorylation at Ser-65 by PINK1 is not essential for activation and only binding to phosphorylated ubiquitin is essential to unlock repression. In addition, ISG15 conjugation positively regulates its ubiquitin E3 ligase activity by suppressing the intramolecular interaction that maintains its autoinhibited conformation. Functions within a multiprotein E3 ubiquitin ligase complex, catalyzing the covalent attachment of ubiquitin moieties onto substrate proteins. Substrates include SYT11 and VDAC1. Other substrates are BCL2, CCNE1, GPR37, RHOT1/MIRO1, MFN1, MFN2, STUB1, SNCAIP, SEPTIN5, TOMM20, USP30, ZNF746, MIRO1 and AIMP2. Mediates monoubiquitination as well as 'Lys-6', 'Lys-11', 'Lys-48'-linked and 'Lys-63'-linked polyubiquitination of substrates depending on the context. Participates in the removal and/or detoxification of abnormally folded or damaged protein by mediating 'Lys-63'-linked polyubiquitination of misfolded proteins such as PARK7: 'Lys-63'-linked polyubiquitinated misfolded proteins are then recognized by HDAC6, leading to their recruitment to aggresomes, followed by degradation. Mediates 'Lys-63'-linked polyubiquitination of a 22 kDa O-linked glycosylated isoform of SNCAIP, possibly playing a role in Lewy-body formation. Mediates monoubiquitination of BCL2, thereby acting as a positive regulator of autophagy. Protects against mitochondrial dysfunction during cellular stress, by acting downstream of PINK1 to coordinate mitochondrial quality control mechanisms that remove and replace dysfunctional mitochondrial components. Depending on the severity of mitochondrial damage and/or dysfunction, activity ranges from preventing apoptosis and stimulating mitochondrial biogenesis to regulating mitochondrial dynamics and eliminating severely damaged mitochondria via mitophagy. Activation and recruitment onto the outer membrane of damaged/dysfunctional mitochondria (OMM) requires PINK1-mediated phosphorylation of both PRKN and ubiquitin. After mitochondrial damage, functions with PINK1 to mediate the decision between mitophagy or preventing apoptosis by inducing either the poly- or monoubiquitination of VDAC1, respectively; polyubiquitination of VDAC1 promotes mitophagy, while monoubiquitination of VDAC1 decreases mitochondrial calcium influx which ultimately inhibits apoptosis. When cellular stress results in irreversible mitochondrial damage, promotes the autophagic degradation of dysfunctional depolarized mitochondria (mitophagy) by promoting the ubiquitination of mitochondrial proteins such as TOMM20, RHOT1/MIRO1, MFN1 and USP30. Preferentially assembles 'Lys-6'-, 'Lys-11'- and 'Lys-63'-linked polyubiquitin chains, leading to mitophagy. The PINK1-PRKN pathway also promotes fission of damaged mitochondria by PINK1-mediated phosphorylation which promotes the PRKN-dependent degradation of mitochondrial proteins involved in fission such as MFN2. This prevents the refusion of unhealthy mitochondria with the mitochondrial network or initiates mitochondrial fragmentation facilitating their later engulfment by autophagosomes. Regulates motility of damaged mitochondria via the ubiquitination and subsequent degradation of MIRO1 and MIRO2; in motor neurons, this likely inhibits mitochondrial intracellular anterograde transport along the axons which probably increases the chance of the mitochondria undergoing mitophagy in the soma. Involved in mitochondrial biogenesis via the 'Lys-48'-linked polyubiquitination of transcriptional repressor ZNF746/PARIS which leads to its subsequent proteasomal degradation and allows activation of the transcription factor PPARGC1A. Limits the production of reactive oxygen species (ROS). Regulates cyclin-E during neuronal apoptosis. In collaboration with CHPF isoform 2, may enhance cell viability and protect cells from oxidative stress. Independently of its ubiquitin ligase activity, protects from apoptosis by the transcriptional repression of p53/TP53. May protect neurons against alpha synuclein toxicity, proteasomal dysfunction, GPR37 accumulation, and kainate-induced excitotoxicity. May play a role in controlling neurotransmitter trafficking at the presynaptic terminal and in calcium-dependent exocytosis. May represent a tumor suppressor gene. This chain is E3 ubiquitin-protein ligase parkin, found in Rattus norvegicus (Rat).